The chain runs to 94 residues: Co-chaperonin GroES (94 aa).

Belongs to the GroES chaperonin family. Heptamer of 7 subunits arranged in a ring. Interacts with the chaperonin GroEL.

Its subcellular location is the cytoplasm. In terms of biological role, together with the chaperonin GroEL, plays an essential role in assisting protein folding. The GroEL-GroES system forms a nano-cage that allows encapsulation of the non-native substrate proteins and provides a physical environment optimized to promote and accelerate protein folding. GroES binds to the apical surface of the GroEL ring, thereby capping the opening of the GroEL channel. In Streptococcus mitis, this protein is Co-chaperonin GroES.